A 702-amino-acid chain; its full sequence is MNSLFASTARGLEELLKTELENLGAVECQVVQGGVHFKGDTRLVYQSLMWSRLASRIMLPLGECKVYSDLDLYLGVQAINWTEMFTPGATFAVHFSGLNDTIRNSQYGAMKVKDAIVDAFTRKNLPRPNVDRDAPDIRVNVWLHKETASIALDLSGDGLHLRGYRDRAGIAPIKETLAAAIVMRSGWQPGTPLLDPMCGSGTLLIEAAMLATDRAPGLHRGRWGFSGWAQHDEAIWQEVKAEAQTRSRKGLAEYSSHFYGSDSDARVIQRARTNARLAGIGELITFEVKDVAQLTNPLPKGPYGTVLSNPPYGERLDSEPALIALHSLLGRIMKNQFGGWNLSLFSASPDLLSCLQLRADKQYKAKNGPLDCVQKNYHVAESTPDSKPAMVAEDYANRLRKNLKKFEKWARQDGIECYRLYDADLPEYNVAVDRYADWVVVQEYAPPKTIDAHKARQRLFDIIAATISVLGIAPNKLVLKTRERQKGKNQYQKLGEKGEFLEVTEYNAHLWVNLTDYLDTGLFLDHRIARRMLGQMSKGKDFLNLFSYTGSATVHAGLGGARSTTTVDMSRTYLEWAERNLRLNGLTGRTHRLIQADCLAWLREANEQFDLIFIDPPTFSNSKRMEDAFDVQRDHLALMKDLKRLLRAGGTIMFSNNKRGFRMDLDGLAKLGLKAQEITQKTLSQDFARNRQIHNCWLITAA.

The region spanning 43 to 154 (LVYQSLMWSR…KETASIALDL (112 aa)) is the THUMP domain.

It belongs to the methyltransferase superfamily. RlmKL family.

The protein resides in the cytoplasm. It carries out the reaction guanosine(2445) in 23S rRNA + S-adenosyl-L-methionine = N(2)-methylguanosine(2445) in 23S rRNA + S-adenosyl-L-homocysteine + H(+). The catalysed reaction is guanosine(2069) in 23S rRNA + S-adenosyl-L-methionine = N(2)-methylguanosine(2069) in 23S rRNA + S-adenosyl-L-homocysteine + H(+). Functionally, specifically methylates the guanine in position 2445 (m2G2445) and the guanine in position 2069 (m7G2069) of 23S rRNA. This chain is Ribosomal RNA large subunit methyltransferase K/L, found in Shigella dysenteriae serotype 1 (strain Sd197).